The chain runs to 3081 residues: Cilia- and flagella-associated protein 54 (3081 aa).

Disordered regions lie at residues 542–579 (SGTA…AGGA), 591–626 (TQTA…QSSL), 910–942 (PPQP…GARK), 1406–1451 (ADAP…GITP), 1518–1586 (ESIL…YPVV), 1636–1657 (RRAA…EERP), 2176–2210 (GERT…LPEP), 2229–2306 (MASG…SQRA), and 2776–2806 (ARPV…SGDG). The segment covering 564 to 579 (GGSASPPNGSSGAGGA) has biased composition (low complexity). Pro residues predominate over residues 1428–1449 (MPPPVPDPSAAGPPPLTPPEGI). A compositionally biased stretch (basic and acidic residues) spans 1538 to 1550 (GGKDDKKKDDKAP). Composition is skewed to low complexity over residues 1638–1648 (AALAASASTAG), 2181–2199 (APKP…AAAA), and 2240–2269 (EPSS…SPTG). Residues 2289 to 2301 (PEVPGPPPPPPPS) show a composition bias toward pro residues. Low complexity predominate over residues 2776–2788 (ARPVATSSSGARP). Over residues 2796–2805 (KPGAGGGSGD) the composition is skewed to gly residues.

Belongs to the CFAP54 family. In terms of assembly, part of the PDCP1 complex composed of CFAP46, CFAP54, CFAP74 and CFAP221; the PDCP1 complex binds calmodulin.

The protein localises to the cytoplasm. It localises to the cytoskeleton. The protein resides in the cilium axoneme. The protein is Cilia- and flagella-associated protein 54 of Chlamydomonas reinhardtii (Chlamydomonas smithii).